The primary structure comprises 150 residues: D-aminoacyl-tRNA deacylase (150 aa).

Positions 136–137 (GP) match the Gly-cisPro motif, important for rejection of L-amino acids motif.

This sequence belongs to the DTD family. In terms of assembly, homodimer.

It is found in the cytoplasm. It carries out the reaction glycyl-tRNA(Ala) + H2O = tRNA(Ala) + glycine + H(+). The enzyme catalyses a D-aminoacyl-tRNA + H2O = a tRNA + a D-alpha-amino acid + H(+). An aminoacyl-tRNA editing enzyme that deacylates mischarged D-aminoacyl-tRNAs. Also deacylates mischarged glycyl-tRNA(Ala), protecting cells against glycine mischarging by AlaRS. Acts via tRNA-based rather than protein-based catalysis; rejects L-amino acids rather than detecting D-amino acids in the active site. By recycling D-aminoacyl-tRNA to D-amino acids and free tRNA molecules, this enzyme counteracts the toxicity associated with the formation of D-aminoacyl-tRNA entities in vivo and helps enforce protein L-homochirality. In Staphylococcus aureus (strain bovine RF122 / ET3-1), this protein is D-aminoacyl-tRNA deacylase.